A 231-amino-acid chain; its full sequence is MGPVALPTWLQPRYRKNAYLFIYYLIQFCGHSWIFTNMTVRFFSFGKDSMVDTFYAIGLVMQLCQSISLLELLHIYVGIESNHLLPRILQLTERIIVLFMVITSQEEVQEKYVVCVLFIFRNLLDMVRYTYSMLSVIGISYAVLTWFSQTLWMPIYPLCVLAEAFTIYQSLPYFESFGTYSTKLPFDLSFYFPYVLKIYLMMLFVGMYFTYNHLYSERRDILRVFPNKKKM.

Topologically, residues 1–19 (MGPVALPTWLQPRYRKNAY) are cytoplasmic. The helical transmembrane segment at 20-40 (LFIYYLIQFCGHSWIFTNMTV) threads the bilayer. At 41–56 (RFFSFGKDSMVDTFYA) the chain is on the lumenal side. Residues 57-77 (IGLVMQLCQSISLLELLHIYV) form a helical membrane-spanning segment. Residues 78–112 (GIESNHLLPRILQLTERIIVLFMVITSQEEVQEKY) are Cytoplasmic-facing. Residues 113–133 (VVCVLFIFRNLLDMVRYTYSM) traverse the membrane as a helical segment. The Lumenal portion of the chain corresponds to 134–135 (LS). Residues 136 to 156 (VIGISYAVLTWFSQTLWMPIY) traverse the membrane as a helical segment. Tyr-156 is an active-site residue. Pro-157 is a topological domain (cytoplasmic). The helical transmembrane segment at 158–178 (LCVLAEAFTIYQSLPYFESFG) threads the bilayer. Residue Glu-163 is part of the active site. The Lumenal portion of the chain corresponds to 179 to 189 (TYSTKLPFDLS). The chain crosses the membrane as a helical span at residues 190-210 (FYFPYVLKIYLMMLFVGMYFT). The Cytoplasmic segment spans residues 211-231 (YNHLYSERRDILRVFPNKKKM).

This sequence belongs to the very long-chain fatty acids dehydratase HACD family. As to quaternary structure, may interact with enzymes of the ELO family (including ELOVL1); with those enzymes that mediate condensation, the first of the four steps of the reaction cycle responsible for fatty acids elongation, may be part of a larger fatty acids elongase complex.

It is found in the endoplasmic reticulum membrane. It carries out the reaction a very-long-chain (3R)-3-hydroxyacyl-CoA = a very-long-chain (2E)-enoyl-CoA + H2O. The catalysed reaction is (3R)-hydroxyhexadecanoyl-CoA = (2E)-hexadecenoyl-CoA + H2O. The protein operates within lipid metabolism; fatty acid biosynthesis. Catalyzes the third of the four reactions of the long-chain fatty acids elongation cycle. This endoplasmic reticulum-bound enzymatic process, allows the addition of two carbons to the chain of long- and very long-chain fatty acids/VLCFAs per cycle. This enzyme catalyzes the dehydration of the 3-hydroxyacyl-CoA intermediate into trans-2,3-enoyl-CoA, within each cycle of fatty acid elongation. Thereby, it participates in the production of VLCFAs of different chain lengths that are involved in multiple biological processes as precursors of membrane lipids and lipid mediators. The protein is Very-long-chain (3R)-3-hydroxyacyl-CoA dehydratase 4 of Bos taurus (Bovine).